The primary structure comprises 126 residues: Fluoride-specific ion channel FluC (126 aa).

The next 4 helical transmembrane spans lie at 4-24 (ILAI…IGLW), 35-55 (YGTF…LTLI), 68-88 (MLVT…YESF), and 100-120 (IGYM…GVGL). The Na(+) site is built by glycine 75 and threonine 78.

The protein belongs to the fluoride channel Fluc/FEX (TC 1.A.43) family.

The protein resides in the cell membrane. It carries out the reaction fluoride(in) = fluoride(out). With respect to regulation, na(+) is not transported, but it plays an essential structural role and its presence is essential for fluoride channel function. Fluoride-specific ion channel. Important for reducing fluoride concentration in the cell, thus reducing its toxicity. The sequence is that of Fluoride-specific ion channel FluC from Chloroflexus aurantiacus (strain ATCC 29366 / DSM 635 / J-10-fl).